The primary structure comprises 93 residues: Phosphoribosyl-ATP pyrophosphatase (93 aa).

This sequence belongs to the PRA-PH family.

The protein localises to the cytoplasm. The catalysed reaction is 1-(5-phospho-beta-D-ribosyl)-ATP + H2O = 1-(5-phospho-beta-D-ribosyl)-5'-AMP + diphosphate + H(+). It functions in the pathway amino-acid biosynthesis; L-histidine biosynthesis; L-histidine from 5-phospho-alpha-D-ribose 1-diphosphate: step 2/9. In Mycolicibacterium vanbaalenii (strain DSM 7251 / JCM 13017 / BCRC 16820 / KCTC 9966 / NRRL B-24157 / PYR-1) (Mycobacterium vanbaalenii), this protein is Phosphoribosyl-ATP pyrophosphatase.